The primary structure comprises 534 residues: Bifunctional purine biosynthesis protein PurH (534 aa).

An MGS-like domain is found at 6-151 (TRLPIRRALI…KNHKDVAIVV (146 aa)).

This sequence belongs to the PurH family.

It catalyses the reaction (6R)-10-formyltetrahydrofolate + 5-amino-1-(5-phospho-beta-D-ribosyl)imidazole-4-carboxamide = 5-formamido-1-(5-phospho-D-ribosyl)imidazole-4-carboxamide + (6S)-5,6,7,8-tetrahydrofolate. It carries out the reaction IMP + H2O = 5-formamido-1-(5-phospho-D-ribosyl)imidazole-4-carboxamide. Its pathway is purine metabolism; IMP biosynthesis via de novo pathway; 5-formamido-1-(5-phospho-D-ribosyl)imidazole-4-carboxamide from 5-amino-1-(5-phospho-D-ribosyl)imidazole-4-carboxamide (10-formyl THF route): step 1/1. It functions in the pathway purine metabolism; IMP biosynthesis via de novo pathway; IMP from 5-formamido-1-(5-phospho-D-ribosyl)imidazole-4-carboxamide: step 1/1. This chain is Bifunctional purine biosynthesis protein PurH, found in Pseudomonas syringae pv. tomato (strain ATCC BAA-871 / DC3000).